We begin with the raw amino-acid sequence, 2104 residues long: MLIEAFINSLLQNLGIMMSFRDLVASPWILLVIAIPLCAFASSASMVREMLFRHKITENILKGTGVEELFNPFGIIIKYFLYFAILYAFIKYIRNNINVITEKVNFIRRVVSNPTGTTGRRGVLGRCVEQIVEYPTFFITMVYELQQIKNKKDLISKITMISSILKLPLGIWESTVGRMLDRPAIEGTEEMLEDVLPIVAMGLTITKTQIGDVPVESFLVNLDRNQKACENIIKRMQPLMIKMGMMKDSSYDTILQVAKEVNELSEAETWMKTTLKLNPNEFLQTQGAVRVGEIREKVATLRNKLNTLQTKELRSDKVVTECQKHLASLEVLLIEVKVLENSNQTRVKPVGVTIQGEKQIGKTNLVAILSRKICEYVQEHGDISFRNATKWTTWSRQCRDEFDTGYTGQEITYVDDAFQQKDNKDHLMWFTFISNTAVGTNQADLKQKGLPYRSKLVFTTCNKSPDKSVTIEDIEALHARFPHTICLRRNKNKMPKRGAIDESYDWVDFYYGPMSKAVSAIGSNTTSTLKTMSLSEIVKIIGDDLIIQNNFYNSTIKDVGITGQEQMDGAQLERRQRMRELRDHLLRIRSGDENMPFLDETFELNSRPIQTDEKFIPLKDNLDEEVMYGGISDQLLTRFDNIIERSLEGYDVESRELGVEPLTTLNHVRSNMLSYRAWNLINSMCINKTETFSAWLGRYITECVEGVAENLVTTKVKIRINPFTGLQLIAAKRMLQENKLIDMDEIPSTSANSYETVYDQIKNFVNDELSLMETDVVDLALAKISLSQIRSNIKRSTWLDVNDWILALKHKISGKSFAKHMDLYPSSLDSFLLTLKDWEVEDRIKFNSIYKQKVLFVQSRFSLYCWSPFISRGTRFVKVTSRFRELVDKLETGILFHEIKSVTNGIRWLGGAGNNGHVGERVRVIAHTAQFPKKSYPQNGFPINEELHREWIQLVINSDYKYHSLIGEEKVNILWNLIRLQPQREVENFKVYLEDLQASPPKTGTICAKVVNDIKAEVTSSYRQFNNYYTRLTKDGMHTLLSMLSRIGVPISDYWNDLLVDKAPAITAVTVGAITSLAIITIVKTFQYAIAGEEQSKGEKRAKQKNIATTKLQKLKFTLGKEQAEGDSIEHVKEFDGDVKFETIEKLFDHIDEHPNLNIVGLNLVAPENPIAIYAAREESYDFSFSEPRPPQWKKVVTFKEDSKRIISLQLRGEDTEDNILDEIEHAIKVSHGMPYAEWIFNGWFKKESNDNILYCVELDLVTAKTQSGPVGWTRAQTKNLKDLEIQLNKGKPIDVKSVVLGAPQASTQATDTMDVLVNKHLVKVHCLSYENLNNLALNGTQVFALASDNILIVPAHAARQNKWIRFSRATQTGHYGVAKVDERRIDFTRDIAIAIILTRAEAEQKLCELGYSIQLTNISKEKFHFPLITKYLLTADQSEVEWMNCTTLHYFAKNKTVGLGRTTSFQVSEFLCGNEYISKKLVACAQGLQSSVELSRLGDCGSPIVLASGKKAGKLIGFHGYHSPNLQTWYGAMLTVEDLGIINGVEEHFDDPWAKLITQGLPVDLPIGPEVEYVGNLIRPSLPVTNDSLDHWHKSPFADQFEEQLAPGRLNPYDSYIEGDLPTNLEGRKSLILGPNSEMAKTLPELDQGILDWIVDQLVVEQVATFKAENLLTKVSDDIDEMLDYALNGNVDNTYVRGMEVNKASGLPWSLSGSPKKSDFIDVDEATGVRSFKVNANGDALKNRVILKLQQAKMGNRILSFSSSKLKDQPIKIAQAKSGRTRVFHCIPVDLILFSGALYGPYKEAYTKAGLKCYHAVGIDPKSVGWQQLATYMTKHPNYFDADYKNYDKYLHRQVFKAVRKIQRSVIQQVCPDKWDKARAVEELDAIDTYVVDYQTVYKTNRGNKSGSYTTTIDNCLANDIYGLYAWVKTTGLRSLWDYRQNVSSVAFGDDIIKSVSDEYKDKYNYCTYRDVLNATGHIMTPGSKDGEEKPFTSFENLQFLKRGFKLENGMVLAPLLQRSIEGPFVWTDIREDQITVWVNLVQEQLIEAALWGEEYYNELCQKLKCGTNRTLNGALAVLLNTSWEVTFQKFCNRYYGIKRGDL.

A run of 2 helical transmembrane segments spans residues 23–43 (LVAS…FASS) and 70–90 (FNPF…YAFI). Residues 289–313 (VRVGEIREKVATLRNKLNTLQTKEL) are a coiled coil. In terms of domain architecture, SF3 helicase spans 329 to 501 (LEVLLIEVKV…NKMPKRGAID (173 aa)). A viral peptidase region spans residues 1499–1520 (GDCGSPIVLASGKKAGKLIGFH). The region spanning 1838–1965 (PNYFDADYKN…SVSDEYKDKY (128 aa)) is the RdRp catalytic domain.

Specific enzymatic cleavages in vivo yield mature proteins.

Its subcellular location is the membrane. It catalyses the reaction RNA(n) + a ribonucleoside 5'-triphosphate = RNA(n+1) + diphosphate. Functionally, the peptidase activity is involved in polyprotein maturation, possibly along with hosts proteases. Transmembrane protein may be surface viral glycoprotein. RNA-directed RNA polymerase replicates the viral genome. The polypeptide is Replication polyprotein (Drosophila melanogaster (Fruit fly)).